A 688-amino-acid polypeptide reads, in one-letter code: Glycine--tRNA ligase beta subunit (688 aa).

This sequence belongs to the class-II aminoacyl-tRNA synthetase family. Tetramer of two alpha and two beta subunits.

It localises to the cytoplasm. It catalyses the reaction tRNA(Gly) + glycine + ATP = glycyl-tRNA(Gly) + AMP + diphosphate. The polypeptide is Glycine--tRNA ligase beta subunit (Shewanella sp. (strain ANA-3)).